Reading from the N-terminus, the 396-residue chain is N-acetylglucosamine-6-phosphate deacetylase (396 aa).

Fe cation is bound by residues histidine 63, histidine 65, and glutamate 136. Residue alanine 147–glutamine 148 participates in substrate binding. Residues histidine 202 and histidine 223 each contribute to the Fe cation site. Residues asparagine 226–alanine 227, arginine 234, and aspartate 255–histidine 258 each bind substrate. Position 281 (aspartate 281) interacts with Fe cation. The active-site Proton donor is the aspartate 281. Leucine 314–glycine 316 is a binding site for substrate.

It belongs to the metallo-dependent hydrolases superfamily. NagA family. As to quaternary structure, homodimer. A divalent metal cation is required as a cofactor.

It carries out the reaction N-acetyl-D-glucosamine 6-phosphate + H2O = D-glucosamine 6-phosphate + acetate. The protein operates within amino-sugar metabolism; N-acetylneuraminate degradation; D-fructose 6-phosphate from N-acetylneuraminate: step 4/5. In terms of biological role, involved in the first committed step in the biosynthesis of amino-sugar-nucleotides. Catalyzes the hydrolysis of the N-acetyl group of N-acetylglucosamine-6-phosphate (GlcNAc-6-P) to yield glucosamine 6-phosphate and acetate. Essential for growth on N-acetylglucosamine. The protein is N-acetylglucosamine-6-phosphate deacetylase (nagA) of Bacillus subtilis (strain 168).